The sequence spans 110 residues: Small ribosomal subunit protein uS17 (110 aa).

The protein belongs to the universal ribosomal protein uS17 family. As to quaternary structure, part of the 30S ribosomal subunit.

Functionally, one of the primary rRNA binding proteins, it binds specifically to the 5'-end of 16S ribosomal RNA. The polypeptide is Small ribosomal subunit protein uS17 (Haloquadratum walsbyi (strain DSM 16790 / HBSQ001)).